A 452-amino-acid chain; its full sequence is Phosphoglucosamine mutase (452 aa).

S108 acts as the Phosphoserine intermediate in catalysis. The Mg(2+) site is built by S108, D247, D249, and D251. S108 is subject to Phosphoserine.

The protein belongs to the phosphohexose mutase family. Mg(2+) serves as cofactor. Post-translationally, activated by phosphorylation.

It carries out the reaction alpha-D-glucosamine 1-phosphate = D-glucosamine 6-phosphate. In terms of biological role, catalyzes the conversion of glucosamine-6-phosphate to glucosamine-1-phosphate. The protein is Phosphoglucosamine mutase of Paraburkholderia xenovorans (strain LB400).